The following is a 136-amino-acid chain: Lymphocyte antigen 6E (136 aa).

The signal sequence occupies residues 1–26 (MSATSNMRVFLPVLLAALLGMEQVHS). The region spanning 27-118 (LMCFSCTDQK…AGLGLRASIP (92 aa)) is the UPAR/Ly6 domain. 5 disulfide bridges follow: Cys29–Cys54, Cys32–Cys41, Cys47–Cys76, Cys80–Cys98, and Cys99–Cys104. N-linked (GlcNAc...) asparagine glycosylation occurs at Asn105. Ala108 carries GPI-anchor amidated alanine lipidation. A propeptide spans 109 to 136 (AGLGLRASIPLLGLGLLLSLLALLQLSP) (removed in mature form).

As to quaternary structure, interacts with CHRNA4. Interacts with CD3Z/CD247. Ubiquitously expressed in mouse adult tissues with maximal expression in the lung and the salivary gland. Expression is strikingly lower in the fetal tissues except for the placenta. Present in thymus where its expression is observed in immature thymocytes and thymic stromal cells. Also found on functionally active T-cells as well as B-cells and thymic dendritic cells.

Its subcellular location is the cell membrane. In terms of biological role, GPI-anchored cell surface protein that regulates T-lymphocytes proliferation, differentiation, and activation. Regulates the T-cell receptor (TCR) signaling by interacting with component CD3Z/CD247 at the plasma membrane, leading to CD3Z/CD247 phosphorylation modulation. Restricts the entry of murine coronavirus, mouse hepatitis virus, by interfering with spike protein-mediated membrane fusion. Also plays an essential role in placenta formation by acting as the main receptor for syncytin-A (SynA). Therefore, participates in the normal fusion of syncytiotrophoblast layer I (SynT-I) and in the proper morphogenesis of both fetal and maternal vasculatures within the placenta. May also act as a modulator of nicotinic acetylcholine receptors (nAChRs) activity. In vitro inhibits alpha-3:beta-4-containing nAChRs maximum response. This chain is Lymphocyte antigen 6E, found in Mus musculus (Mouse).